The following is an 803-amino-acid chain: Isoamylase 1, chloroplastic (803 aa).

The transit peptide at 1-54 (MASLPHCLSARPLVVAAAPGRPGPGPGPWLRGGARRRNAAFSAGNAGRRVGLRR) directs the protein to the chloroplast. Residue Asp-432 is the Nucleophile of the active site. Glu-488 functions as the Proton donor in the catalytic mechanism.

The protein belongs to the glycosyl hydrolase 13 family. Forms a homo-pentamer and a hetero-hexamer composed of five ISA1 and one ISA2. Interacts with FLO6/SIP4. As to expression, highly expressed in developing endosperm. Expressed at low levels in leaves.

It is found in the plastid. It localises to the chloroplast. It catalyses the reaction Hydrolysis of (1-&gt;6)-alpha-D-glucosidic branch linkages in glycogen, amylopectin and their beta-limit dextrins.. Its pathway is glycan biosynthesis; starch biosynthesis. Inhibited by copper chloride, mercury chloride, ammonium molybdate and para-chloromercuribenzoate. In terms of biological role, starch-debranching enzyme involved in amylopectin biosynthesis in endosperm. Functions by removing excess branches or improper branches that interfere with the formation of double helices of the cluster chains of amylopectin and crystallization of starch. Works as ISA1 homooligomer or together with ISA2 as heterooligomer. The heterooligomer ISA1 and ISA2 possesses higher affinity than the ISA1 homooligomer for various branched polyglucans in vitro, but no marked differences exist in chain preferences for debranching of amylopectin and phytoglycogen between these forms. The chain is Isoamylase 1, chloroplastic from Oryza sativa subsp. japonica (Rice).